We begin with the raw amino-acid sequence, 313 residues long: D-alanine--D-alanine ligase (313 aa).

Residues Lys107–Cys303 form the ATP-grasp domain. Residue Pro135 to Gln188 participates in ATP binding. Asp256, Glu269, and Asn271 together coordinate Mg(2+).

It belongs to the D-alanine--D-alanine ligase family. It depends on Mg(2+) as a cofactor. The cofactor is Mn(2+).

The protein localises to the cytoplasm. It catalyses the reaction 2 D-alanine + ATP = D-alanyl-D-alanine + ADP + phosphate + H(+). Its pathway is cell wall biogenesis; peptidoglycan biosynthesis. Cell wall formation. This is D-alanine--D-alanine ligase from Trichlorobacter lovleyi (strain ATCC BAA-1151 / DSM 17278 / SZ) (Geobacter lovleyi).